The following is a 79-amino-acid chain: Protein B6 (79 aa).

The polypeptide is Protein B6 (B6) (Human herpesvirus 6B (strain Z29) (HHV-6 variant B)).